A 119-amino-acid polypeptide reads, in one-letter code: MISWIRTLGALLLLASVAQAQFQFFEHMFGNGGHQQQRSQNVPSDSARYQSMWDSAQCDKYLCPGTLACVHFPHHCPCPHPDVEEKVELGEGSAVCVSRGGYRQGEASRKIELARKGLL.

An N-terminal signal peptide occupies residues 1 to 20 (MISWIRTLGALLLLASVAQA).

The protein belongs to the LCL2 family.

Functionally, probable component of the endoplasmic reticulum-associated degradation (ERAD) pathway. The sequence is that of Long chronological lifespan protein 2 (lcl2) from Aspergillus terreus (strain NIH 2624 / FGSC A1156).